The chain runs to 313 residues: Protoheme IX farnesyltransferase (313 aa).

9 helical membrane-spanning segments follow: residues 22-42 (FALLKPRVMSLVVFTAFVGLM), 46-66 (IGVHPVIGFCAILFIAIGGGA), 98-118 (GEALSLGLALSGLSVIMLALA), 121-141 (VFAGAFLAFTIFFYVVIYTMW), 150-170 (IVIGGAAGAFPPVIGWIAATG), 177-197 (WLMFALTFLWTPPHFWALALF), 223-243 (ILVYTVILAAFALTTAFTSVG), 246-266 (IYLTTAVVLNALFLKGAVQIW), and 284-304 (FFKLSLLYLFLHFGAILAEAL).

Belongs to the UbiA prenyltransferase family. Protoheme IX farnesyltransferase subfamily. Interacts with CtaA.

It is found in the cell inner membrane. It catalyses the reaction heme b + (2E,6E)-farnesyl diphosphate + H2O = Fe(II)-heme o + diphosphate. Its pathway is porphyrin-containing compound metabolism; heme O biosynthesis; heme O from protoheme: step 1/1. Its function is as follows. Converts heme B (protoheme IX) to heme O by substitution of the vinyl group on carbon 2 of heme B porphyrin ring with a hydroxyethyl farnesyl side group. The sequence is that of Protoheme IX farnesyltransferase from Ruegeria sp. (strain TM1040) (Silicibacter sp.).